The following is a 237-amino-acid chain: Putative ATP-binding protein BMEII0108 (237 aa).

The ABC transporter domain maps to 5–205 (ISFNNVVMRY…DLPYPRTEAI (201 aa)). 37–44 (GPSGCGKS) serves as a coordination point for ATP.

This sequence belongs to the ABC transporter superfamily. The complex is composed of two ATP-binding proteins (BMEII0108), two transmembrane proteins (BMEII0107) and a solute-binding protein (BMEII0109).

It localises to the cell inner membrane. Probably part of an ABC transporter complex. Probably Responsible for energy coupling to the transport system. This Brucella melitensis biotype 1 (strain ATCC 23456 / CCUG 17765 / NCTC 10094 / 16M) protein is Putative ATP-binding protein BMEII0108.